The primary structure comprises 840 residues: Phosphatidylglycerol lysyltransferase (840 aa).

The Cytoplasmic portion of the chain corresponds to 1-8 (MNQEVKNK). Residues 9-29 (IFSILKITFATALFIFVVITL) form a helical membrane-spanning segment. Topologically, residues 30–52 (YRELSGINFKDTLVEFSKINRMS) are extracellular. Residues 53–73 (LVLLFIGGGASLVILSMYDVI) traverse the membrane as a helical segment. Over 74 to 89 (LSRALKMDISLGKVLR) the chain is Cytoplasmic. A helical membrane pass occupies residues 90 to 110 (VSYIINALNAIVGFGGFIGAG). The Extracellular portion of the chain corresponds to 111–128 (VRAMVYKNYTHDKKKLVH). The chain crosses the membrane as a helical span at residues 129–149 (FISLILISMLTGLSLLSLLIV). Residues 150 to 161 (FHVFDASLILDK) lie on the Cytoplasmic side of the membrane. The chain crosses the membrane as a helical span at residues 162–182 (ITWVRWVLYVVSFFLPLFIIY). The Extracellular segment spans residues 183 to 200 (SMVRPPDKNNRFVGLYCT). Residues 201-221 (LVSCVEWLAAAVVLYFCGVIV) traverse the membrane as a helical segment. At 222 to 229 (DAHVSFMS) the chain is on the cytoplasmic side. The chain crosses the membrane as a helical span at residues 230–250 (FIAIFIIAALSGLVSFIPGGF). Residues 251-271 (GAFDLVVLLGFKTLGVPEEKV) are Extracellular-facing. The chain crosses the membrane as a helical span at residues 272–292 (LLMLLLYRFAYYFVPVIIALI). Residues 293-337 (LSSFEFGTSAKKYIEGSKYFIPAKDVTSFLMSYQKDIIAKIPSLS) are Cytoplasmic-facing. The chain crosses the membrane as a helical span at residues 338–358 (LAILVFFTSMIFFVNNLTIVY). Residues 359 to 369 (DALYDGNHLTY) are Extracellular-facing. Residues 370–390 (YILLAIHTSACLLLLLNVVGI) form a helical membrane-spanning segment. The Cytoplasmic segment spans residues 391–394 (YKQS). The next 2 membrane-spanning stretches (helical) occupy residues 395–415 (RRAI…TFFT) and 416–436 (YASY…IVAF). Topologically, residues 437 to 450 (RRARRLKRPVRMRN) are cytoplasmic. The helical transmembrane segment at 451–471 (IVAMLLFSLFILYVNHIFIAG) threads the bilayer. At 472-489 (TLYALDIYTIEMHTSVLR) the chain is on the extracellular side. Residues 490-510 (YYFWLTILIIAIIIGMIAWLF) traverse the membrane as a helical segment. The Cytoplasmic segment spans residues 511-840 (DYQFSKVRIS…SKVMRVIRHK (330 aa)).

Belongs to the LPG synthase family.

Its subcellular location is the cell membrane. It carries out the reaction L-lysyl-tRNA(Lys) + a 1,2-diacyl-sn-glycero-3-phospho-(1'-sn-glycerol) = a 1,2-diacyl-sn-glycero-3-phospho-1'-(3'-O-L-lysyl)-sn-glycerol + tRNA(Lys). In terms of biological role, catalyzes the transfer of a lysyl group from L-lysyl-tRNA(Lys) to membrane-bound phosphatidylglycerol (PG), which produces lysylphosphatidylglycerol (LPG), a major component of the bacterial membrane with a positive net charge. LPG synthesis contributes to bacterial virulence as it is involved in the resistance mechanism against cationic antimicrobial peptides (CAMP) produces by the host's immune system (defensins, cathelicidins) and by the competing microorganisms (bacteriocins). In fact, the modification of anionic phosphatidylglycerol with positively charged L-lysine results in repulsion of the peptides. In Staphylococcus aureus (strain MSSA476), this protein is Phosphatidylglycerol lysyltransferase (mprF).